We begin with the raw amino-acid sequence, 91 residues long: MQITDVRIRKISSEGKMKAIVSVTFDNEFVVHDIKVIEGQNGLFIAMPSRKTPTGEFKDIAHPIVMDSREKIQNEILSAYAKAIEEQDVEE.

The protein belongs to the SpoVG family.

In terms of biological role, could be involved in septation. The chain is Putative septation protein SpoVG from Clostridium botulinum (strain Alaska E43 / Type E3).